The following is a 416-amino-acid chain: Adenylosuccinate synthetase (416 aa).

GTP is bound by residues 13–19 (GDEGKGK) and 41–43 (GHT). Catalysis depends on aspartate 14, which acts as the Proton acceptor. Mg(2+) contacts are provided by aspartate 14 and glycine 41. Residues 14 to 17 (DEGK), 39 to 42 (NAGH), threonine 126, arginine 140, glutamine 220, threonine 235, and arginine 299 contribute to the IMP site. Histidine 42 (proton donor) is an active-site residue. Residue 295–301 (TTTGRPR) coordinates substrate. GTP is bound by residues arginine 301, 327–329 (KLD), and 405–407 (STS).

This sequence belongs to the adenylosuccinate synthetase family. As to quaternary structure, homodimer. Mg(2+) is required as a cofactor.

Its subcellular location is the cytoplasm. The enzyme catalyses IMP + L-aspartate + GTP = N(6)-(1,2-dicarboxyethyl)-AMP + GDP + phosphate + 2 H(+). It functions in the pathway purine metabolism; AMP biosynthesis via de novo pathway; AMP from IMP: step 1/2. Its function is as follows. Plays an important role in the de novo pathway of purine nucleotide biosynthesis. Catalyzes the first committed step in the biosynthesis of AMP from IMP. This chain is Adenylosuccinate synthetase, found in Sulfurovum sp. (strain NBC37-1).